Consider the following 73-residue polypeptide: MKNIFMLTLFILIITSTIKAIGSTNEVDEIKQEDDGLCYEGTNCGKVGKYCCSPIGKYCVCYDSKAICNKNCT.

An N-terminal signal peptide occupies residues 1–20; the sequence is MKNIFMLTLFILIITSTIKA. A propeptide spanning residues 21-33 is cleaved from the precursor; the sequence is IGSTNEVDEIKQE. 4 disulfide bridges follow: Cys38–Cys68, Cys44–Cys59, Cys51–Cys61, and Cys52–Cys72.

Monomer.

The sequence is that of Pollen allergen Amb t 5 from Ambrosia trifida (Giant ragweed).